The chain runs to 371 residues: Histidinol-phosphate aminotransferase (371 aa).

Position 222 is an N6-(pyridoxal phosphate)lysine (Lys222).

It belongs to the class-II pyridoxal-phosphate-dependent aminotransferase family. Histidinol-phosphate aminotransferase subfamily. As to quaternary structure, homodimer. Pyridoxal 5'-phosphate is required as a cofactor.

The enzyme catalyses L-histidinol phosphate + 2-oxoglutarate = 3-(imidazol-4-yl)-2-oxopropyl phosphate + L-glutamate. It participates in amino-acid biosynthesis; L-histidine biosynthesis; L-histidine from 5-phospho-alpha-D-ribose 1-diphosphate: step 7/9. This chain is Histidinol-phosphate aminotransferase, found in Anoxybacillus flavithermus (strain DSM 21510 / WK1).